A 424-amino-acid chain; its full sequence is Enolase (424 aa).

Gln-165 contributes to the (2R)-2-phosphoglycerate binding site. The active-site Proton donor is the Glu-207. Mg(2+) contacts are provided by Asp-244, Glu-283, and Asp-310. (2R)-2-phosphoglycerate contacts are provided by Lys-335, Arg-364, Ser-365, and Lys-386. Lys-335 serves as the catalytic Proton acceptor.

It belongs to the enolase family. It depends on Mg(2+) as a cofactor.

It is found in the cytoplasm. The protein localises to the secreted. Its subcellular location is the cell surface. The enzyme catalyses (2R)-2-phosphoglycerate = phosphoenolpyruvate + H2O. It participates in carbohydrate degradation; glycolysis; pyruvate from D-glyceraldehyde 3-phosphate: step 4/5. Catalyzes the reversible conversion of 2-phosphoglycerate (2-PG) into phosphoenolpyruvate (PEP). It is essential for the degradation of carbohydrates via glycolysis. The sequence is that of Enolase from Chlamydia trachomatis serovar D (strain ATCC VR-885 / DSM 19411 / UW-3/Cx).